A 525-amino-acid chain; its full sequence is Packaging protein UL32 homolog (525 aa).

Positions 1-12 are enriched in polar residues; it reads MAHKVTSANEPN. The tract at residues 1–20 is disordered; it reads MAHKVTSANEPNPLTGKRLS. Cysteine 95, cysteine 98, histidine 173, cysteine 179, cysteine 255, cysteine 256, cysteine 357, cysteine 360, histidine 427, cysteine 434, cysteine 473, and histidine 510 together coordinate Zn(2+). 3 zinc finger regions span residues 95-179, 255-510, and 357-434; these read CRVC…ICRC, CCHL…LRIH, and CPLC…DPLC.

This sequence belongs to the herpesviridae UL32 protein family.

It is found in the host cytoplasm. It localises to the host nucleus. In terms of biological role, plays a role in efficient localization of neo-synthesized capsids to nuclear replication compartments, thereby controlling cleavage and packaging of virus genomic DNA. The polypeptide is Packaging protein UL32 homolog (Epstein-Barr virus (strain B95-8) (HHV-4)).